We begin with the raw amino-acid sequence, 363 residues long: Trichocyst matrix protein T4-B (363 aa).

Residues 1 to 17 (MARSLTILAIVFAVATA) form the signal peptide. A propeptide spanning residues 18-52 (RVTKSESPKEILAQVNKDSFGNSILSVLQLQLATG) is cleaved from the precursor. Residues 85 to 119 (VAFEKIIADLEQEIAYHQTQIVALSNLRDSTTEAL) adopt a coiled-coil conformation. Positions 190-221 (RFEKVQAKLMESKHALFKPLINALTQLASKVD) are excised as a propeptide. The stretch at 244–352 (ASLLATEERQ…EVLTQKLSAA (109 aa)) forms a coiled coil.

Belongs to the TMP family. Post-translationally, two components are produced by post-translational processing from the precursor peptide.

Its subcellular location is the trichocyst. In terms of biological role, structural protein that crystallize inside the trichocyst matrix. This Paramecium tetraurelia protein is Trichocyst matrix protein T4-B (T4B).